We begin with the raw amino-acid sequence, 167 residues long: Endoribonuclease YbeY (167 aa).

Residues H131, H135, and H141 each coordinate Zn(2+).

The protein belongs to the endoribonuclease YbeY family. Zn(2+) serves as cofactor.

The protein resides in the cytoplasm. In terms of biological role, single strand-specific metallo-endoribonuclease involved in late-stage 70S ribosome quality control and in maturation of the 3' terminus of the 16S rRNA. This chain is Endoribonuclease YbeY, found in Rickettsia felis (strain ATCC VR-1525 / URRWXCal2) (Rickettsia azadi).